Here is a 431-residue protein sequence, read N- to C-terminus: CCA tRNA nucleotidyltransferase 1, mitochondrial (431 aa).

The transit peptide at 1–31 directs the protein to the mitochondrion; sequence MWAKLFLRPSFVNRVHLTWSCRALLTMQLKT. 2 residues coordinate ATP: glycine 61 and arginine 64. The CTP site is built by glycine 61 and arginine 64. Aspartate 74 and aspartate 76 together coordinate Mg(2+). Positions 148, 191, 194, 197, and 200 each coordinate ATP. Residues arginine 148, aspartate 191, arginine 194, arginine 197, and arginine 200 each coordinate CTP.

The protein belongs to the tRNA nucleotidyltransferase/poly(A) polymerase family. As to quaternary structure, monomer, and homodimer. Mg(2+) serves as cofactor. As to expression, expressed ubiquitously during early embryogenesis.

It localises to the mitochondrion. Its subcellular location is the cytoplasm. The protein localises to the nucleus. It carries out the reaction a tRNA precursor + 2 CTP + ATP = a tRNA with a 3' CCA end + 3 diphosphate. It catalyses the reaction a tRNA with a 3' CCA end + 2 CTP + ATP = a tRNA with a 3' CCACCA end + 3 diphosphate. Its function is as follows. Nucleotidyltransferase that catalyzes the addition and repair of the essential 3'-terminal CCA sequence in tRNAs, which is necessary for the attachment of amino acids to the 3' terminus of tRNA molecules, using CTP and ATP as substrates. tRNA 3'-terminal CCA addition is required both for tRNA processing and repair. Promotes tRNA repair and recycling downstream of the ribosome-associated quality control (RQC) pathway by mediating addition of the tRNA 3'-terminal CCA following cleavage by ankzf1 and repair by elac1. Also involved in tRNA surveillance by mediating tandem CCA addition to generate a CCACCA at the 3' terminus of unstable tRNAs and tRNA-like transcripts. While stable tRNAs receive only 3'-terminal CCA, unstable tRNAs beginning with GG are marked with CCACCA and rapidly degraded. The structural flexibility of RNA controls the choice between CCA versus CCACCA addition: following the first CCA addition cycle, nucleotide-binding to the active site triggers a clockwise screw motion, producing torque on the RNA. This ejects stable RNAs, whereas unstable RNAs are refolded while bound to the enzyme and subjected to a second CCA catalytic cycle. The protein is CCA tRNA nucleotidyltransferase 1, mitochondrial of Danio rerio (Zebrafish).